We begin with the raw amino-acid sequence, 239 residues long: Ribonuclease PH (239 aa).

Phosphate contacts are provided by residues R87 and 125–127 (GTR).

This sequence belongs to the RNase PH family. Homohexameric ring arranged as a trimer of dimers.

The catalysed reaction is tRNA(n+1) + phosphate = tRNA(n) + a ribonucleoside 5'-diphosphate. Functionally, phosphorolytic 3'-5' exoribonuclease that plays an important role in tRNA 3'-end maturation. Removes nucleotide residues following the 3'-CCA terminus of tRNAs; can also add nucleotides to the ends of RNA molecules by using nucleoside diphosphates as substrates, but this may not be physiologically important. Probably plays a role in initiation of 16S rRNA degradation (leading to ribosome degradation) during starvation. This is Ribonuclease PH from Syntrophomonas wolfei subsp. wolfei (strain DSM 2245B / Goettingen).